Consider the following 83-residue polypeptide: Protein Vpu (83 aa).

The Extracellular portion of the chain corresponds to 1–4; that stretch reads MLSL. A helical membrane pass occupies residues 5-25; sequence GFIALGAAVSIAVIVWALLYR. Residues 26–83 lie on the Cytoplasmic side of the membrane; that stretch reads EYKKIKLQEKIKHIRQRIREREEDSGNESDGDAEWLDGDEEWLVTLLSSSKLDQGNWV. Ser50 and Ser54 each carry phosphoserine; by host CK2.

It belongs to the HIV-1 VPU protein family. Homopentamer. Interacts with host CD4 and BRTC; these interactions induce proteasomal degradation of CD4. Interacts with host BST2; this interaction leads to the degradation of host BST2. Interacts with host FBXW11. Interacts with host AP1M1; this interaction plays a role in the mistrafficking and subsequent degradation of host BST2. Interacts with host RANBP2; this interaction allows Vpu to down-regulate host BLM sumoylation. Phosphorylated by host CK2. This phosphorylation is necessary for interaction with human BTRC and degradation of CD4.

Its subcellular location is the host membrane. With respect to regulation, ion channel activity is inhibited by hexamethylene amiloride in vitro. In terms of biological role, enhances virion budding by targeting host CD4 and Tetherin/BST2 to proteasome degradation. Degradation of CD4 prevents any unwanted premature interactions between viral Env and its host receptor CD4 in the endoplasmic reticulum. Degradation of antiretroviral protein Tetherin/BST2 is important for virion budding, as BST2 tethers new viral particles to the host cell membrane. Mechanistically, Vpu bridges either CD4 or BST2 to BTRC, a substrate recognition subunit of the Skp1/Cullin/F-box protein E3 ubiquitin ligase, induces their ubiquitination and subsequent proteasomal degradation. The alteration of the E3 ligase specificity by Vpu seems to promote the degradation of host IKBKB, leading to NF-kappa-B down-regulation and subsequent apoptosis. Acts as a viroporin that forms an oligomeric ion channel in membranes. Modulates the host DNA repair mechanisms to promote degradation of nuclear viral cDNA in cells that are already productively infected in order to suppress immune sensing and proviral hyper-integration (superinfection). Manipulates PML-NBs and modulates SUMOylation of host BLM protein thereby enhancing its DNA-end processing activity toward viral unintegrated linear DNA. Also inhibits RAD52-mediated homologous repair of viral cDNA, preventing the generation of dead-end circular forms of single copies of the long terminal repeat and permitting sustained nucleolytic attack. This chain is Protein Vpu, found in Human immunodeficiency virus type 1 group N (isolate YBF30) (HIV-1).